Here is a 237-residue protein sequence, read N- to C-terminus: Redox-sensing transcriptional repressor Rex (237 aa).

Residues 45-84 (LYYRELHRLLAAGESSTNSRDLGAMVNVSPAVVRRDLSSI) constitute a DNA-binding region (H-T-H motif). 119 to 124 (GVGSLG) lines the NAD(+) pocket.

The protein belongs to the transcriptional regulatory Rex family. As to quaternary structure, homodimer.

The protein localises to the cytoplasm. In terms of biological role, modulates transcription in response to changes in cellular NADH/NAD(+) redox state. This Rhodopirellula baltica (strain DSM 10527 / NCIMB 13988 / SH1) protein is Redox-sensing transcriptional repressor Rex.